We begin with the raw amino-acid sequence, 273 residues long: Phosphate import ATP-binding protein PstB (273 aa).

In terms of domain architecture, ABC transporter spans 19-258; it reads ISIQNVTISY…FNETEKIFNS (240 aa). 51 to 58 lines the ATP pocket; the sequence is GPSGCGKS.

Belongs to the ABC transporter superfamily. Phosphate importer (TC 3.A.1.7) family. In terms of assembly, the complex is composed of two ATP-binding proteins (PstB), two transmembrane proteins (PstC and PstA) and a solute-binding protein (PstS).

The protein resides in the cell inner membrane. It catalyses the reaction phosphate(out) + ATP + H2O = ADP + 2 phosphate(in) + H(+). In terms of biological role, part of the ABC transporter complex PstSACB involved in phosphate import. Responsible for energy coupling to the transport system. This chain is Phosphate import ATP-binding protein PstB, found in Parasynechococcus marenigrum (strain WH8102).